Reading from the N-terminus, the 757-residue chain is 5-methyltetrahydropteroyltriglutamate--homocysteine methyltransferase (757 aa).

Residues 17–20 and lysine 115 each bind 5-methyltetrahydropteroyltri-L-glutamate; that span reads RELK. Residues 430 to 432 and glutamate 483 each bind L-homocysteine; that span reads IGS. L-methionine contacts are provided by residues 430–432 and glutamate 483; that span reads IGS. 5-methyltetrahydropteroyltri-L-glutamate is bound by residues 514–515 and tryptophan 560; that span reads RC. Residue aspartate 598 coordinates L-homocysteine. Residue aspartate 598 participates in L-methionine binding. Residue glutamate 604 participates in 5-methyltetrahydropteroyltri-L-glutamate binding. Zn(2+) contacts are provided by histidine 640, cysteine 642, and glutamate 664. Histidine 693 (proton donor) is an active-site residue. Cysteine 725 contacts Zn(2+).

This sequence belongs to the vitamin-B12 independent methionine synthase family. Requires Zn(2+) as cofactor.

The enzyme catalyses 5-methyltetrahydropteroyltri-L-glutamate + L-homocysteine = tetrahydropteroyltri-L-glutamate + L-methionine. The protein operates within amino-acid biosynthesis; L-methionine biosynthesis via de novo pathway; L-methionine from L-homocysteine (MetE route): step 1/1. In terms of biological role, catalyzes the transfer of a methyl group from 5-methyltetrahydrofolate to homocysteine resulting in methionine formation. The polypeptide is 5-methyltetrahydropteroyltriglutamate--homocysteine methyltransferase (Buchnera aphidicola subsp. Schizaphis graminum (strain Sg)).